The following is a 1588-amino-acid chain: Pentafunctional AROM polypeptide (1588 aa).

Residues Met1 to Asp392 are 3-dehydroquinate synthase. NAD(+) is bound by residues Asp43–Asn45, Glu78–Lys81, Gly109–Val111, and Asp114. Arg125 contributes to the 7-phospho-2-dehydro-3-deoxy-D-arabino-heptonate binding site. NAD(+) is bound at residue Thr134–Ser135. Residues Asp141 and Lys147 each contribute to the 7-phospho-2-dehydro-3-deoxy-D-arabino-heptonate site. Residue Lys156 participates in NAD(+) binding. Residue Asn157 coordinates 7-phospho-2-dehydro-3-deoxy-D-arabino-heptonate. Residues Trp174 to Thr177 and Asn185 each bind NAD(+). Glu189 contributes to the Zn(2+) binding site. 7-phospho-2-dehydro-3-deoxy-D-arabino-heptonate-binding positions include Glu189–Lys192 and Lys258. Catalysis depends on Glu268, which acts as the Proton acceptor; for 3-dehydroquinate synthase activity. 7-phospho-2-dehydro-3-deoxy-D-arabino-heptonate is bound by residues Arg272–Asn276 and His279. His279 is a Zn(2+) binding site. His283 serves as the catalytic Proton acceptor; for 3-dehydroquinate synthase activity. 7-phospho-2-dehydro-3-deoxy-D-arabino-heptonate is bound by residues His295 and Lys364. His295 serves as a coordination point for Zn(2+). The tract at residues Val405–Ala871 is EPSP synthase. The For EPSP synthase activity role is filled by Cys853. The shikimate kinase stretch occupies residues Ser890–Cys1080. An ATP-binding site is contributed by Gly895 to Thr902. Residues Leu1081–Gln1293 are 3-dehydroquinase. His1198 serves as the catalytic Proton acceptor; for 3-dehydroquinate dehydratase activity. Residue Lys1227 is the Schiff-base intermediate with substrate; for 3-dehydroquinate dehydratase activity of the active site. Residues Pro1306–Glu1588 are shikimate dehydrogenase.

This sequence in the N-terminal section; belongs to the sugar phosphate cyclases superfamily. Dehydroquinate synthase family. The protein in the 2nd section; belongs to the EPSP synthase family. It in the 3rd section; belongs to the shikimate kinase family. In the 4th section; belongs to the type-I 3-dehydroquinase family. This sequence in the C-terminal section; belongs to the shikimate dehydrogenase family. Homodimer. The cofactor is Zn(2+).

The protein localises to the cytoplasm. It catalyses the reaction 7-phospho-2-dehydro-3-deoxy-D-arabino-heptonate = 3-dehydroquinate + phosphate. The enzyme catalyses 3-dehydroquinate = 3-dehydroshikimate + H2O. It carries out the reaction shikimate + NADP(+) = 3-dehydroshikimate + NADPH + H(+). The catalysed reaction is shikimate + ATP = 3-phosphoshikimate + ADP + H(+). It catalyses the reaction 3-phosphoshikimate + phosphoenolpyruvate = 5-O-(1-carboxyvinyl)-3-phosphoshikimate + phosphate. Its pathway is metabolic intermediate biosynthesis; chorismate biosynthesis; chorismate from D-erythrose 4-phosphate and phosphoenolpyruvate: step 2/7. It functions in the pathway metabolic intermediate biosynthesis; chorismate biosynthesis; chorismate from D-erythrose 4-phosphate and phosphoenolpyruvate: step 3/7. The protein operates within metabolic intermediate biosynthesis; chorismate biosynthesis; chorismate from D-erythrose 4-phosphate and phosphoenolpyruvate: step 4/7. It participates in metabolic intermediate biosynthesis; chorismate biosynthesis; chorismate from D-erythrose 4-phosphate and phosphoenolpyruvate: step 5/7. Its pathway is metabolic intermediate biosynthesis; chorismate biosynthesis; chorismate from D-erythrose 4-phosphate and phosphoenolpyruvate: step 6/7. Functionally, the AROM polypeptide catalyzes 5 consecutive enzymatic reactions in prechorismate polyaromatic amino acid biosynthesis. In Saccharomyces cerevisiae (strain JAY291) (Baker's yeast), this protein is Pentafunctional AROM polypeptide.